Reading from the N-terminus, the 266-residue chain is Ribosomal RNA small subunit methyltransferase A (266 aa).

The S-adenosyl-L-methionine site is built by Asn12, Leu14, Gly39, Glu61, Asp87, and Asn107.

It belongs to the class I-like SAM-binding methyltransferase superfamily. rRNA adenine N(6)-methyltransferase family. RsmA subfamily.

The protein localises to the cytoplasm. It carries out the reaction adenosine(1518)/adenosine(1519) in 16S rRNA + 4 S-adenosyl-L-methionine = N(6)-dimethyladenosine(1518)/N(6)-dimethyladenosine(1519) in 16S rRNA + 4 S-adenosyl-L-homocysteine + 4 H(+). Its function is as follows. Specifically dimethylates two adjacent adenosines (A1518 and A1519) in the loop of a conserved hairpin near the 3'-end of 16S rRNA in the 30S particle. May play a critical role in biogenesis of 30S subunits. The sequence is that of Ribosomal RNA small subunit methyltransferase A from Nitratidesulfovibrio vulgaris (strain ATCC 29579 / DSM 644 / CCUG 34227 / NCIMB 8303 / VKM B-1760 / Hildenborough) (Desulfovibrio vulgaris).